Reading from the N-terminus, the 203-residue chain is Translation machinery-associated protein 16 (203 aa).

The disordered stretch occupies residues 1–39; it reads MPKAPKGKSAGREKKVIHPYSRKAAQITREAHKQEKKEK. Serine 9 bears the ADP-ribosylserine mark. The segment covering 29-39 has biased composition (basic and acidic residues); that stretch reads REAHKQEKKEK.

This sequence belongs to the TMA16 family. As to quaternary structure, associates with pre-60S ribosomal particles.

The protein resides in the nucleus. Its function is as follows. Involved in the biogenesis of the 60S ribosomal subunit in the nucleus. This is Translation machinery-associated protein 16 (TMA16) from Homo sapiens (Human).